A 134-amino-acid chain; its full sequence is MTLKKVDANPSTLESSLQELKSDETSRSKINFILFLADNDPTTGQSWCPDCVRAEPVIYKTLEEFPEEVKLIRAYAGDRPTWRTPAHPWRVDSRFKLTGVPTLVRWDGDSVKGRLEDHQAHLPHLILPLLAPST.

The region spanning 1–134 is the Thioredoxin domain; sequence MTLKKVDANP…LILPLLAPST (134 aa). Residues Cys48 and Cys51 each act as nucleophile in the active site. Residues Cys48 and Cys51 are joined by a disulfide bond.

This sequence belongs to the thioredoxin family.

Probable thiol-disulfide oxidoreductase that may participate in various redox reactions. This Arabidopsis thaliana (Mouse-ear cress) protein is Thioredoxin-like protein Clot.